The chain runs to 267 residues: 2-keto-3-deoxy-L-rhamnonate aldolase (267 aa).

Catalysis depends on His49, which acts as the Proton acceptor. Gln151 is a binding site for substrate. Glu153 serves as a coordination point for Mg(2+). Positions 178 and 179 each coordinate substrate. Residue Asp179 coordinates Mg(2+).

Belongs to the HpcH/HpaI aldolase family. KDR aldolase subfamily. In terms of assembly, homohexamer. Mg(2+) serves as cofactor.

The enzyme catalyses 2-dehydro-3-deoxy-L-rhamnonate = (S)-lactaldehyde + pyruvate. Functionally, catalyzes the reversible retro-aldol cleavage of 2-keto-3-deoxy-L-rhamnonate (KDR) to pyruvate and lactaldehyde. This chain is 2-keto-3-deoxy-L-rhamnonate aldolase, found in Escherichia coli O6:K15:H31 (strain 536 / UPEC).